Reading from the N-terminus, the 404-residue chain is Serine/threonine-protein kinase UCN (404 aa).

The Protein kinase domain maps to 22–340; that stretch reads LKVLKLLGKG…AAEIKEHAFF (319 aa). ATP is bound by residues 28–36 and K55; that span reads LGKGATGTV. D153 functions as the Proton acceptor in the catalytic mechanism. Residues 185 to 207 are disordered; it reads EFYHLSDPEPDPNPESNLSHNKK. One can recognise an AGC-kinase C-terminal domain in the interval 341-404; it reads KGVRWELLTE…CSENNPFVDF (64 aa).

Belongs to the protein kinase superfamily. AGC Ser/Thr protein kinase family. As to expression, expressed in the epidermis and cortex of the transition zone of the root apex and developing flowers. Expressed in rosette leaves, stems and siliques.

The protein resides in the cytoplasm. Its subcellular location is the nucleus. The enzyme catalyses L-seryl-[protein] + ATP = O-phospho-L-seryl-[protein] + ADP + H(+). It catalyses the reaction L-threonyl-[protein] + ATP = O-phospho-L-threonyl-[protein] + ADP + H(+). Its function is as follows. Regulates planar ovule integument development by suppressing aberrantly oriented growth. Maintains planar growth of integuments by repressing the developmental regulator and transcription factor KAN4 which is involved in the control of early integument growth and polarity. Restricts growth in stamen filaments, petals, and cotyledons. The protein is Serine/threonine-protein kinase UCN of Arabidopsis thaliana (Mouse-ear cress).